Consider the following 151-residue polypeptide: MKVIFMQDVKGRGKRGQVKDVPNGYAQNYLIKQGLAKEANKCNLNTLKRVEANEKAEYEAQKAAAQEIKKQLEADETVVELKAKAGSDSRLFGSISSKKIIEGLDKQFGIKLDKHKLELREPIKVLGYTNVPVKLFKGVESKVRVHVTQEN.

Belongs to the bacterial ribosomal protein bL9 family.

Functionally, binds to the 23S rRNA. In Lactobacillus delbrueckii subsp. bulgaricus (strain ATCC BAA-365 / Lb-18), this protein is Large ribosomal subunit protein bL9.